The chain runs to 106 residues: uncharacterized protein (106 aa).

This is an uncharacterized protein from Mycoplasma pneumoniae (strain ATCC 29342 / M129 / Subtype 1) (Mycoplasmoides pneumoniae).